The chain runs to 66 residues: Large ribosomal subunit protein bL33c (66 aa).

This sequence belongs to the bacterial ribosomal protein bL33 family.

Its subcellular location is the plastid. The protein resides in the chloroplast. The polypeptide is Large ribosomal subunit protein bL33c (Coffea arabica (Arabian coffee)).